Reading from the N-terminus, the 57-residue chain is Large ribosomal subunit protein bL32 (57 aa).

A compositionally biased stretch (basic residues) spans 1 to 20 (MAVPKKKTSKTKRDQRKANW). The interval 1–21 (MAVPKKKTSKTKRDQRKANWK) is disordered.

This sequence belongs to the bacterial ribosomal protein bL32 family.

The chain is Large ribosomal subunit protein bL32 from Rippkaea orientalis (strain PCC 8801 / RF-1) (Cyanothece sp. (strain PCC 8801)).